We begin with the raw amino-acid sequence, 167 residues long: NADH-quinone oxidoreductase subunit I 1 (167 aa).

4Fe-4S ferredoxin-type domains are found at residues 52–82 and 98–127; these read LQRD…IEAA and KVYN…HGHG. Residues cysteine 62, cysteine 65, cysteine 68, cysteine 72, cysteine 107, cysteine 110, cysteine 113, and cysteine 117 each coordinate [4Fe-4S] cluster. The tract at residues 148-167 is disordered; it reads PVPPGAKPPSMADEVPAGAH.

This sequence belongs to the complex I 23 kDa subunit family. NDH-1 is composed of 14 different subunits. Subunits NuoA, H, J, K, L, M, N constitute the membrane sector of the complex. It depends on [4Fe-4S] cluster as a cofactor.

It localises to the cell inner membrane. It catalyses the reaction a quinone + NADH + 5 H(+)(in) = a quinol + NAD(+) + 4 H(+)(out). Its function is as follows. NDH-1 shuttles electrons from NADH, via FMN and iron-sulfur (Fe-S) centers, to quinones in the respiratory chain. The immediate electron acceptor for the enzyme in this species is believed to be ubiquinone. Couples the redox reaction to proton translocation (for every two electrons transferred, four hydrogen ions are translocated across the cytoplasmic membrane), and thus conserves the redox energy in a proton gradient. The protein is NADH-quinone oxidoreductase subunit I 1 of Solibacter usitatus (strain Ellin6076).